The primary structure comprises 376 residues: CC-adding tRNA nucleotidyltransferase (376 aa).

Residue 26–29 coordinates CTP; that stretch reads GAVR. Mg(2+) is bound by residues Asp39 and Asp41. Residues 94–95, Asn99, 136–145, and Arg176 contribute to the CTP site; these read RD and DPLRMLRAAR.

It belongs to the tRNA nucleotidyltransferase/poly(A) polymerase family. Mg(2+) is required as a cofactor.

The catalysed reaction is a tRNA precursor + 2 CTP = a tRNA with a 3' CC end + 2 diphosphate. TRNA nucleotidyltransferase involved in the synthesis of the tRNA CCA terminus. Adds the two cytidine residues to tRNA. The sequence is that of CC-adding tRNA nucleotidyltransferase from Shouchella clausii (strain KSM-K16) (Alkalihalobacillus clausii).